Here is a 353-residue protein sequence, read N- to C-terminus: S-adenosylmethionine:tRNA ribosyltransferase-isomerase (353 aa).

The protein belongs to the QueA family. As to quaternary structure, monomer.

It localises to the cytoplasm. It catalyses the reaction 7-aminomethyl-7-carbaguanosine(34) in tRNA + S-adenosyl-L-methionine = epoxyqueuosine(34) in tRNA + adenine + L-methionine + 2 H(+). Its pathway is tRNA modification; tRNA-queuosine biosynthesis. Its function is as follows. Transfers and isomerizes the ribose moiety from AdoMet to the 7-aminomethyl group of 7-deazaguanine (preQ1-tRNA) to give epoxyqueuosine (oQ-tRNA). The sequence is that of S-adenosylmethionine:tRNA ribosyltransferase-isomerase from Rickettsia bellii (strain RML369-C).